We begin with the raw amino-acid sequence, 182 residues long: uncharacterized protein (182 aa).

The span at 1 to 23 shows a compositional bias: polar residues; the sequence is MILSDQNFLQTQWKEPQTAQSKN. The segment at 1-33 is disordered; it reads MILSDQNFLQTQWKEPQTAQSKNTESKCEFHGN.

It belongs to the peptidase M24 family.

This is an uncharacterized protein from Caenorhabditis elegans.